The primary structure comprises 333 residues: MATLKEKLMTPVAAASAVPSSKITVVGVGQVGMACAVSILGKGLCDELALVDVLEDKLKGEMMDLQHGSLFLQTHKIVADKDYAVTANSKIVVVTAGVRQQEGESRLNLVQRNVGVFKGIIPQIVKYSPNCTILVVSNPVDILTYVTWKLSGLPKHRVIGSGCNLDTARFRYLMAERLGIHPTSCHGWILGEHGDSSVAVWSGVNVAGVSLQELNPAMGTDKDSENWKEVHKQVVESAYEVIRLKGYTNWAIGLSVAELCETMLKNLCRVHSVSTLVKGTYGIENDVFLSLPCVLSASGLTSVINQKLKDDEVAQLKKSADTLWSIQKDLKDM.

NAD(+)-binding positions include 29-57 (GQVG…LEDK) and arginine 99. Substrate is bound by residues arginine 106, asparagine 138, and arginine 169. Asparagine 138 contacts NAD(+). The active-site Proton acceptor is the histidine 193. Threonine 248 contacts substrate.

The protein belongs to the LDH/MDH superfamily. LDH family. As to quaternary structure, homotetramer.

It is found in the cytoplasm. The catalysed reaction is (S)-lactate + NAD(+) = pyruvate + NADH + H(+). It functions in the pathway fermentation; pyruvate fermentation to lactate; (S)-lactate from pyruvate: step 1/1. In terms of biological role, interconverts simultaneously and stereospecifically pyruvate and lactate with concomitant interconversion of NADH and NAD(+). This is L-lactate dehydrogenase B chain (LDHB) from Anas platyrhynchos (Mallard).